The sequence spans 273 residues: 3-methyl-2-oxobutanoate hydroxymethyltransferase (273 aa).

Asp53 and Asp92 together coordinate Mg(2+). Residues 53–54 (DS), Asp92, and Lys122 contribute to the 3-methyl-2-oxobutanoate site. Glu124 serves as a coordination point for Mg(2+). Glu191 functions as the Proton acceptor in the catalytic mechanism.

Belongs to the PanB family. Homodecamer; pentamer of dimers. Requires Mg(2+) as cofactor.

It is found in the cytoplasm. It carries out the reaction 3-methyl-2-oxobutanoate + (6R)-5,10-methylene-5,6,7,8-tetrahydrofolate + H2O = 2-dehydropantoate + (6S)-5,6,7,8-tetrahydrofolate. The protein operates within cofactor biosynthesis; (R)-pantothenate biosynthesis; (R)-pantoate from 3-methyl-2-oxobutanoate: step 1/2. In terms of biological role, catalyzes the reversible reaction in which hydroxymethyl group from 5,10-methylenetetrahydrofolate is transferred onto alpha-ketoisovalerate to form ketopantoate. This Phocaeicola vulgatus (strain ATCC 8482 / DSM 1447 / JCM 5826 / CCUG 4940 / NBRC 14291 / NCTC 11154) (Bacteroides vulgatus) protein is 3-methyl-2-oxobutanoate hydroxymethyltransferase.